Reading from the N-terminus, the 131-residue chain is Class I hydrophobin POH2 (131 aa).

The N-terminal stretch at 1 to 21 (MFFRTSSLFTTIVAFTVMAAA) is a signal peptide. 4 cysteine pairs are disulfide-bonded: Cys-50–Cys-110, Cys-57–Cys-104, Cys-58–Cys-91, and Cys-111–Cys-124. 2 N-linked (GlcNAc...) asparagine glycosylation sites follow: Asn-115 and Asn-128.

It belongs to the fungal hydrophobin family. As to quaternary structure, self-assembles to form functional amyloid fibrils called rodlets. Self-assembly into fibrillar rodlets occurs spontaneously at hydrophobic:hydrophilic interfaces and the rodlets further associate laterally to form amphipathic monolayers. As to expression, expressionn is switched off in the fruiting bodies but abundantly expressed in the vegetative mycelium of both monokaryon and dikaryon.

It is found in the secreted. The protein localises to the cell wall. In terms of biological role, aerial growth, conidiation, and dispersal of filamentous fungi in the environment rely upon a capability of their secreting small amphipathic proteins called hydrophobins (HPBs) with low sequence identity. Class I can self-assemble into an outermost layer of rodlet bundles on aerial cell surfaces, conferring cellular hydrophobicity that supports fungal growth, development and dispersal; whereas Class II form highly ordered films at water-air interfaces through intermolecular interactions but contribute nothing to the rodlet structure. POH2 is a class I hydrophobin that causes a large drop in the water-surface tension, enabling hyphae to breach the interface and grow into the air, in both the primary and the secondary mycelium. In the latter mycelium POH2 maight also play a role in the emergence of fruiting bodies. Secreted POH2 could also play a role in facilitating lignin degradation. The protein is Class I hydrophobin POH2 of Pleurotus ostreatus (Oyster mushroom).